The following is a 120-amino-acid chain: Large ribosomal subunit protein bL19c (120 aa).

Belongs to the bacterial ribosomal protein bL19 family.

The protein resides in the plastid. It is found in the chloroplast. The polypeptide is Large ribosomal subunit protein bL19c (Thalassiosira weissflogii (Marine diatom)).